A 171-amino-acid polypeptide reads, in one-letter code: Sec-independent protein translocase protein TatB (171 aa).

Residues 2–22 (FDGIGFMELLLIGVLGLVVLG) traverse the membrane as a helical segment. The tract at residues 69–171 (SKGLSNLSPE…DTRSNPKANG (103 aa)) is disordered. Residues 88-97 (QAAQSVNRPY) are compositionally biased toward polar residues. Composition is skewed to low complexity over residues 114–130 (HSPVSSTVQTSQVHTSP) and 138–158 (PTATVEASPTSASPATPSEPS). Positions 160–171 (GADTRSNPKANG) are enriched in polar residues.

The protein belongs to the TatB family. As to quaternary structure, the Tat system comprises two distinct complexes: a TatABC complex, containing multiple copies of TatA, TatB and TatC subunits, and a separate TatA complex, containing only TatA subunits. Substrates initially bind to the TatABC complex, which probably triggers association of the separate TatA complex to form the active translocon.

The protein localises to the cell inner membrane. Functionally, part of the twin-arginine translocation (Tat) system that transports large folded proteins containing a characteristic twin-arginine motif in their signal peptide across membranes. Together with TatC, TatB is part of a receptor directly interacting with Tat signal peptides. TatB may form an oligomeric binding site that transiently accommodates folded Tat precursor proteins before their translocation. This is Sec-independent protein translocase protein TatB from Shewanella baltica (strain OS185).